Reading from the N-terminus, the 287-residue chain is ATP synthase gamma chain (287 aa).

The protein belongs to the ATPase gamma chain family. In terms of assembly, F-type ATPases have 2 components, CF(1) - the catalytic core - and CF(0) - the membrane proton channel. CF(1) has five subunits: alpha(3), beta(3), gamma(1), delta(1), epsilon(1). CF(0) has three main subunits: a, b and c.

It is found in the cell inner membrane. Produces ATP from ADP in the presence of a proton gradient across the membrane. The gamma chain is believed to be important in regulating ATPase activity and the flow of protons through the CF(0) complex. The protein is ATP synthase gamma chain of Klebsiella pneumoniae (strain 342).